Reading from the N-terminus, the 680-residue chain is Serine/threonine-protein kinase YPK1 (680 aa).

Over residues 1-11 (MYSWKSKFKFG) the composition is skewed to basic residues. A disordered region spans residues 1-117 (MYSWKSKFKF…GTPNDATSSS (117 aa)). 2 stretches are compositionally biased toward basic and acidic residues: residues 12–21 (KSKEEKEAKH) and 41–56 (GEHDASITRSSLDRKG). T57 carries the post-translational modification Phosphothreonine. The segment covering 59-71 (NPSNSSVVPVRVS) has biased composition (low complexity). Phosphoserine is present on residues S61, S64, and S71. Polar residues predominate over residues 73-83 (DASSSTSTVRD). Positions 84–97 (SNGGNSENTNSSQN) are enriched in low complexity. The span at 98–117 (LDETANIGSTGTPNDATSSS) shows a compositional bias: polar residues. S170 carries the post-translational modification Phosphoserine. A Protein kinase domain is found at 347-602 (FDLLKVIGKG…ADEIRNHPFF (256 aa)). ATP is bound by residues 353-361 (IGKGSFGKV) and K376. D470 acts as the Proton acceptor in catalysis. T502 is subject to Phosphothreonine. A Phosphothreonine; by PKH1 modification is found at T504. Positions 603 to 673 (SQLSWKRLLM…VGNEQLGSSM (71 aa)) constitute an AGC-kinase C-terminal domain. Phosphoserine is present on residues S644 and S653. Residue T662 is modified to Phosphothreonine; by PKH1. Phosphoserine is present on S671.

This sequence belongs to the protein kinase superfamily. AGC Ser/Thr protein kinase family. RAC subfamily. Post-translationally, autophosphorylated. Phytosphingosine level stimulates phosphorylation by PKH1. The N-terminal half is phosphorylated by FPK1. Phosphorylation is inhibited by exogenous addition of phytosphingosine.

It is found in the cytoplasm. Its subcellular location is the cell membrane. It carries out the reaction L-seryl-[protein] + ATP = O-phospho-L-seryl-[protein] + ADP + H(+). It catalyses the reaction L-threonyl-[protein] + ATP = O-phospho-L-threonyl-[protein] + ADP + H(+). Its activity is regulated as follows. Activated by phytosphingosine (PHS), a sphingoid long chain base. Activated by PKH1 phosphorylation. Its function is as follows. Plays an essential role in the proliferation of yeast cells. Involved in a signaling pathway, required for optimal cell wall integrity, that acts in parallel with the PKC1-SLT2-dependent pathway. Downstream kinase in the sphingolipid-mediated signaling pathway. Phosphorylation is regulated by the intracellular sphingolipid concentration. Disruption or inhibition of sphingolipid synthesis leads to the activation and phosphorylation of YPK1 through the TORC2 and PKH1 pathways, which in turn phosphorylates ORM1 and LAG1 to activate sphingolipid synthesis. Cooperates with SLI1 in mediating resistance to the sphingolipid biosynthesis inhibitor drug myriocin (ISP-1); kinase activity is essential for the resistance. Required for both receptor-mediated and fluid-phase endocytosis, but is not necessary for receptor phosphorylation or ubiquitination. Necessary for the internalization of plasma membrane proteins carrying different types of internalization signals. Acts downstream of the PKH kinases to control endocytosis by phosphorylating components of the endocytic machinery. Phosphorylation of residue Thr-504 in the activation loop and residue Thr-662 are essential for activity. Phosphorylates and down-regulates flippase activator FPK1. The chain is Serine/threonine-protein kinase YPK1 (YPK1) from Saccharomyces cerevisiae (strain ATCC 204508 / S288c) (Baker's yeast).